The chain runs to 230 residues: Cytochrome c oxidase subunit 2 (230 aa).

Topologically, residues 1–14 are mitochondrial intermembrane; it reads MAHPTQLGFQDAAS. A helical membrane pass occupies residues 15–45; sequence PVMEELLHFHDHALMIVFLISALVLYVIITT. Over 46–59 the chain is Mitochondrial matrix; the sequence is VSTKLTNMYILDSQ. Residues 60–87 form a helical membrane-spanning segment; it reads EIEIVWTVLPALILILIALPSLRILYLM. Residues 88–230 lie on the Mitochondrial intermembrane side of the membrane; sequence DEINDPHLTI…NWSTLMLKDA (143 aa). His-161, Cys-196, Glu-198, Cys-200, His-204, and Met-207 together coordinate Cu cation. Mg(2+) is bound at residue Glu-198.

This sequence belongs to the cytochrome c oxidase subunit 2 family. As to quaternary structure, component of the cytochrome c oxidase (complex IV, CIV), a multisubunit enzyme composed of 14 subunits. The complex is composed of a catalytic core of 3 subunits MT-CO1, MT-CO2 and MT-CO3, encoded in the mitochondrial DNA, and 11 supernumerary subunits COX4I, COX5A, COX5B, COX6A, COX6B, COX6C, COX7A, COX7B, COX7C, COX8 and NDUFA4, which are encoded in the nuclear genome. The complex exists as a monomer or a dimer and forms supercomplexes (SCs) in the inner mitochondrial membrane with NADH-ubiquinone oxidoreductase (complex I, CI) and ubiquinol-cytochrome c oxidoreductase (cytochrome b-c1 complex, complex III, CIII), resulting in different assemblies (supercomplex SCI(1)III(2)IV(1) and megacomplex MCI(2)III(2)IV(2)). Found in a complex with TMEM177, COA6, COX18, COX20, SCO1 and SCO2. Interacts with TMEM177 in a COX20-dependent manner. Interacts with COX20. Interacts with COX16. The cofactor is Cu cation.

The protein resides in the mitochondrion inner membrane. It carries out the reaction 4 Fe(II)-[cytochrome c] + O2 + 8 H(+)(in) = 4 Fe(III)-[cytochrome c] + 2 H2O + 4 H(+)(out). In terms of biological role, component of the cytochrome c oxidase, the last enzyme in the mitochondrial electron transport chain which drives oxidative phosphorylation. The respiratory chain contains 3 multisubunit complexes succinate dehydrogenase (complex II, CII), ubiquinol-cytochrome c oxidoreductase (cytochrome b-c1 complex, complex III, CIII) and cytochrome c oxidase (complex IV, CIV), that cooperate to transfer electrons derived from NADH and succinate to molecular oxygen, creating an electrochemical gradient over the inner membrane that drives transmembrane transport and the ATP synthase. Cytochrome c oxidase is the component of the respiratory chain that catalyzes the reduction of oxygen to water. Electrons originating from reduced cytochrome c in the intermembrane space (IMS) are transferred via the dinuclear copper A center (CU(A)) of subunit 2 and heme A of subunit 1 to the active site in subunit 1, a binuclear center (BNC) formed by heme A3 and copper B (CU(B)). The BNC reduces molecular oxygen to 2 water molecules using 4 electrons from cytochrome c in the IMS and 4 protons from the mitochondrial matrix. The chain is Cytochrome c oxidase subunit 2 (mt-co2) from Formosania lacustris (Oriental stream loach).